The following is a 187-amino-acid chain: Ponticulin-like protein K (187 aa).

The signal sequence occupies residues 1-19; sequence MKNLILLFLLISIINLIQS. N-linked (GlcNAc...) asparagine glycans are attached at residues N31, N70, N86, N93, N119, N128, N146, N160, and N161. Residues 115 to 146 show a composition bias toward low complexity; that stretch reads PSPSNSSNPSPSPNTTSSSSLSSSSLNSNEPN. Residues 115-161 are disordered; sequence PSPSNSSNPSPSPNTTSSSSLSSSSLNSNEPNQTTKPPKTNEPQKNN. The segment covering 147-161 has biased composition (polar residues); it reads QTTKPPKTNEPQKNN. The GPI-like-anchor amidated asparagine moiety is linked to residue N161. Residues 162–187 constitute a propeptide, removed in mature form; the sequence is STSNIPNFFAIFGFLVLIIFILGDKI.

This sequence belongs to the ponticulin family. The GPI-like-anchor contains a phosphoceramide group, rather than a phosphatidyl group.

It is found in the cell membrane. Its function is as follows. Binds F-actin and nucleates actin assembly. This Dictyostelium discoideum (Social amoeba) protein is Ponticulin-like protein K (ponK).